The primary structure comprises 455 residues: Exodeoxyribonuclease 7 large subunit (455 aa).

The protein belongs to the XseA family. As to quaternary structure, heterooligomer composed of large and small subunits.

The protein resides in the cytoplasm. It carries out the reaction Exonucleolytic cleavage in either 5'- to 3'- or 3'- to 5'-direction to yield nucleoside 5'-phosphates.. In terms of biological role, bidirectionally degrades single-stranded DNA into large acid-insoluble oligonucleotides, which are then degraded further into small acid-soluble oligonucleotides. This Escherichia coli (strain SMS-3-5 / SECEC) protein is Exodeoxyribonuclease 7 large subunit.